We begin with the raw amino-acid sequence, 405 residues long: L-rhamnonate dehydratase (405 aa).

Residues His-33 and Arg-59 each coordinate substrate. Mg(2+)-binding residues include Asp-226, Glu-252, and Glu-280. His-329 acts as the Proton acceptor in catalysis. Residue Glu-349 coordinates substrate.

It belongs to the mandelate racemase/muconate lactonizing enzyme family. RhamD subfamily. As to quaternary structure, homooctamer; tetramer of dimers. It depends on Mg(2+) as a cofactor.

It catalyses the reaction L-rhamnonate = 2-dehydro-3-deoxy-L-rhamnonate + H2O. Catalyzes the dehydration of L-rhamnonate to 2-keto-3-deoxy-L-rhamnonate (KDR). Can also dehydrate L-lyxonate and L-mannonate, although less efficiently, but not 2-keto-4-hydroxyheptane-1,7-dioate. The sequence is that of L-rhamnonate dehydratase (rhmD) from Salmonella typhimurium (strain LT2 / SGSC1412 / ATCC 700720).